Consider the following 253-residue polypeptide: tRNA uridine(34) hydroxylase (253 aa).

Residues 127-221 (HGRPLVLLDT…YFEDVGGEGY (95 aa)) enclose the Rhodanese domain. Cys181 functions as the Cysteine persulfide intermediate in the catalytic mechanism.

It belongs to the TrhO family.

It catalyses the reaction uridine(34) in tRNA + AH2 + O2 = 5-hydroxyuridine(34) in tRNA + A + H2O. Its function is as follows. Catalyzes oxygen-dependent 5-hydroxyuridine (ho5U) modification at position 34 in tRNAs. This is tRNA uridine(34) hydroxylase from Xanthomonas campestris pv. campestris (strain 8004).